Here is a 353-residue protein sequence, read N- to C-terminus: Tsukushi (353 aa).

Residues 1-17 (MLCTLFLLLLALGIVQT) form the signal peptide. An LRRNT domain is found at 18-59 (TRPCFPGCQCEEETFGLFDSFSLIRVDCSSLGPHIVPVPIPL). LRR repeat units follow at residues 60 to 80 (DTAHLDLSSNRLETVNESVLG), 86 to 107 (TLAGLDLSHNLLTSITPTAFSR), 110 to 131 (YLESLDLSHNGLAALPAEVFTS), 133 to 154 (PLSDINLSHNRLREVSISAFTT), 160 to 180 (ALHVDLSHNLIHRLLPYPARA), 186 to 207 (TIQSLNLSWNRLRAVPDLRDLP), 208 to 228 (LRYLSLDGNPLATINPGAFMG), 231 to 253 (GLTHLSLASLQGILQLPPHGFRE), 256 to 277 (GLQVLDLSGNPKLKWAGAEVFS), and 281 to 302 (LLQELDLSGSSLVPLPETLLHH). N75 carries N-linked (GlcNAc...) asparagine glycosylation. N-linked (GlcNAc...) asparagine glycosylation is present at N138. N191 carries an N-linked (GlcNAc...) asparagine glycan.

In terms of assembly, interacts with FZD4 (via FZ domain); competes with WNT2B for binding to FZD4, inhibiting Wnt signaling and repressing peripheral eye development. Interacts with TGFB1; the interaction contributes to regulation of the hair cycle. Interacts with netrin. Interacts with CCN2. As to expression, expressed at high levels in the liver, small intestine and placenta. Not or barely detectable in other tissues, including whole pancreas, adipose tissues, skeletal muscle, kidney, spleen, brain, lung and testis.

The protein localises to the secreted. Functionally, contributes to various developmental events and other processes such as wound healing and cholesterol homeostasis through its interactions with multiple signaling pathways. Wnt signaling inhibitor which competes with WNT2B for binding to Wnt receptor FZD4 and represses WNT2B-dependent development of the peripheral eye. Plays a role in regulating the hair cycle by controlling TGFB1 signaling. Required for the development of the anterior commissure in the brain by inhibiting neurite outgrowth. Essential for terminal differentiation of hippocampal neural stem cells. Plays a role in regulating bone elongation and bone mass by modulating growth plate chondrocyte function and overall body size. Required for development of the inner ear through its involvement in stereocilia formation in inner hair cells. Facilitates wound healing by inhibiting secretion of TGFB1 from macrophages which prevents myofibroblast differentiation, maintaining inflammatory cell quiescence. Plays a role in cholesterol homeostasis by reducing circulating high-density lipoprotein cholesterol, lowering cholesterol efflux capacity and decreasing cholesterol-to-bile acid conversion in the liver. In one study, shown to negatively regulate sympathetic innervation in brown fat, leading to reduced energy expenditure. In another study, shown not to affect brown fat thermogenic capacity, body weight gain or glucose homeostasis. The polypeptide is Tsukushi (Tsku) (Rattus norvegicus (Rat)).